A 242-amino-acid polypeptide reads, in one-letter code: Probable transcriptional regulatory protein Cphy_2507 (242 aa).

This sequence belongs to the TACO1 family.

It localises to the cytoplasm. This is Probable transcriptional regulatory protein Cphy_2507 from Lachnoclostridium phytofermentans (strain ATCC 700394 / DSM 18823 / ISDg) (Clostridium phytofermentans).